The following is a 541-amino-acid chain: EH domain-containing protein 4 (541 aa).

An N-acetylmethionine modification is found at methionine 1. Residues 58–289 (FENKPMILLV…DLFRDIQSLP (232 aa)) enclose the Dynamin-type G domain. Residues 68–75 (GQYSTGKT) form a G1 motif region. ATP is bound at residue 68–75 (GQYSTGKT). The tract at residues 94 to 95 (EP) is G2 motif. Residues 156–159 (DSPG) are G3 motif. Serine 162 carries the phosphoserine modification. The interval 222 to 225 (NKAD) is G4 motif. Lysine 223 lines the ATP pocket. Position 246 (valine 246) is a region of interest, G5 motif. Tryptophan 261 lines the ATP pocket. In terms of domain architecture, EH spans 447–535 (DKPVYDELFY…PHLVPPSHRK (89 aa)). Tyrosine 451 carries the phosphotyrosine modification. Serine 459 carries the post-translational modification Phosphoserine. Residues 479 to 514 (LPNSVLGKIWKLADCDCDGMLDEEEFALAKHLIKIK) enclose the EF-hand domain. Ca(2+) is bound by residues aspartate 492, aspartate 494, aspartate 496, methionine 498, and glutamate 503.

Belongs to the TRAFAC class dynamin-like GTPase superfamily. Dynamin/Fzo/YdjA family. EHD subfamily. In terms of assembly, homooligomer, and heterooligomer with EHD1, EHD2 and EHD3. Forms a complex with EHD4 and MICALL1; the complex controls CDH5 trafficking and coordinates angiogenesis. As to expression, highly expressed in pancreas and heart.

The protein resides in the early endosome membrane. It localises to the recycling endosome membrane. Its subcellular location is the cell membrane. The protein localises to the cell junction. It is found in the adherens junction. In terms of biological role, ATP- and membrane-binding protein that probably controls membrane reorganization/tubulation upon ATP hydrolysis. Plays a role in early endosomal transport. During sprouting angiogenesis, in complex with PACSIN2 and MICALL1, forms recycling endosome-like tubular structure at asymmetric adherens junctions to control CDH5 trafficking. The polypeptide is EH domain-containing protein 4 (Homo sapiens (Human)).